The chain runs to 216 residues: TATA-box-binding protein-like 1 (216 aa).

2 repeat units span residues 38–121 and 126–210.

Belongs to the TBP family.

It localises to the nucleus. In terms of biological role, TATA box-binding transcription factor. Members of the TBP family are differentially required to regulate transcription and development during early embryogenesis. The sequence is that of TATA-box-binding protein-like 1 (trf1) from Entamoeba histolytica (strain ATCC 30459 / HM-1:IMSS / ABRM).